A 373-amino-acid chain; its full sequence is Outer membrane protein assembly factor BamC (373 aa).

Residues 1–16 form the signal peptide; that stretch reads MLKQVTPLVLIAAVTA. Cys-17 carries the N-palmitoyl cysteine lipid modification. The S-diacylglycerol cysteine moiety is linked to residue Cys-17.

Belongs to the BamC family. In terms of assembly, part of the Bam complex.

Its subcellular location is the cell outer membrane. In terms of biological role, part of the outer membrane protein assembly complex, which is involved in assembly and insertion of beta-barrel proteins into the outer membrane. This Shewanella sediminis (strain HAW-EB3) protein is Outer membrane protein assembly factor BamC.